The following is a 393-amino-acid chain: MTVINMTDLDLAGKRVFIRADLNVPVSDGKVTSDARITASIPTIRHALDAKARVMVTSHLGRPEEGVYSEENSLQPVADVLADKLGQPVRLIKDWVDGGFEVAEGEVVLLENCRFNKGEKKNAEETARKYAALCDVFVMDAFGTAHRAEASTYGVAQYAPVAAAGLLLVGELDALGKALCEPARPMVAIVGGSKVSTKLTVLESLAEKVDQLVVGGGIANTFLKAAGKPIGRSLSEDDLVPTAQCLMEKMAKRGAAVPIAVDVVCGKQFDANEPAVLKSAEDVADDDMIFDIGPESAKQLAEIILNAGTVVWNGPVGVFEFDQFGEGTKTIADAIAKTKAFTLAGGGDTIAAIQKYDIYDKVSYISTAGGAFLEFLEGKKLPAVEILEQRAKG.

Substrate-binding positions include 21–23 (DLN), Arg-36, 59–62 (HLGR), Arg-114, and Arg-147. ATP is bound by residues Lys-198, Glu-320, and 346 to 349 (GGDT).

The protein belongs to the phosphoglycerate kinase family. In terms of assembly, monomer.

Its subcellular location is the cytoplasm. The enzyme catalyses (2R)-3-phosphoglycerate + ATP = (2R)-3-phospho-glyceroyl phosphate + ADP. It functions in the pathway carbohydrate degradation; glycolysis; pyruvate from D-glyceraldehyde 3-phosphate: step 2/5. The polypeptide is Phosphoglycerate kinase (Methylobacillus flagellatus (strain ATCC 51484 / DSM 6875 / VKM B-1610 / KT)).